The sequence spans 302 residues: Bifunctional protein FolD (302 aa).

NADP(+) contacts are provided by residues 165 to 167 (GRS), Ser190, and Ile231.

Belongs to the tetrahydrofolate dehydrogenase/cyclohydrolase family. As to quaternary structure, homodimer.

The catalysed reaction is (6R)-5,10-methylene-5,6,7,8-tetrahydrofolate + NADP(+) = (6R)-5,10-methenyltetrahydrofolate + NADPH. The enzyme catalyses (6R)-5,10-methenyltetrahydrofolate + H2O = (6R)-10-formyltetrahydrofolate + H(+). It participates in one-carbon metabolism; tetrahydrofolate interconversion. In terms of biological role, catalyzes the oxidation of 5,10-methylenetetrahydrofolate to 5,10-methenyltetrahydrofolate and then the hydrolysis of 5,10-methenyltetrahydrofolate to 10-formyltetrahydrofolate. The protein is Bifunctional protein FolD of Prochlorococcus marinus (strain MIT 9211).